Consider the following 173-residue polypeptide: MENIIARRYAKAIASRADINDFYQNLCILNSAFVLPKFKNIIESNEIKKERKMEFLDSFFDIKNSSFQNFLRLLIENSRLECIPQIVKELERQKAFKENIFVGIVYSKEKLSQENLKDLEVKLNKKFDANIKLNNKISQDDSVKIELEELGYELSFSMKALQNKLNEYILKII.

This sequence belongs to the ATPase delta chain family. As to quaternary structure, F-type ATPases have 2 components, F(1) - the catalytic core - and F(0) - the membrane proton channel. F(1) has five subunits: alpha(3), beta(3), gamma(1), delta(1), epsilon(1). F(0) has three main subunits: a(1), b(2) and c(10-14). The alpha and beta chains form an alternating ring which encloses part of the gamma chain. F(1) is attached to F(0) by a central stalk formed by the gamma and epsilon chains, while a peripheral stalk is formed by the delta and b chains.

It localises to the cell inner membrane. F(1)F(0) ATP synthase produces ATP from ADP in the presence of a proton or sodium gradient. F-type ATPases consist of two structural domains, F(1) containing the extramembraneous catalytic core and F(0) containing the membrane proton channel, linked together by a central stalk and a peripheral stalk. During catalysis, ATP synthesis in the catalytic domain of F(1) is coupled via a rotary mechanism of the central stalk subunits to proton translocation. Functionally, this protein is part of the stalk that links CF(0) to CF(1). It either transmits conformational changes from CF(0) to CF(1) or is implicated in proton conduction. The sequence is that of ATP synthase subunit delta from Campylobacter jejuni subsp. jejuni serotype O:2 (strain ATCC 700819 / NCTC 11168).